Here is a 357-residue protein sequence, read N- to C-terminus: Phosphoribosylformylglycinamidine cyclo-ligase (357 aa).

Belongs to the AIR synthase family.

The protein resides in the cytoplasm. The catalysed reaction is 2-formamido-N(1)-(5-O-phospho-beta-D-ribosyl)acetamidine + ATP = 5-amino-1-(5-phospho-beta-D-ribosyl)imidazole + ADP + phosphate + H(+). It participates in purine metabolism; IMP biosynthesis via de novo pathway; 5-amino-1-(5-phospho-D-ribosyl)imidazole from N(2)-formyl-N(1)-(5-phospho-D-ribosyl)glycinamide: step 2/2. This Rhizobium rhizogenes (strain K84 / ATCC BAA-868) (Agrobacterium radiobacter) protein is Phosphoribosylformylglycinamidine cyclo-ligase.